A 54-amino-acid chain; its full sequence is Glutathione S-transferase 6.7 (54 aa).

Belongs to the GST superfamily. Theta family. As to quaternary structure, homodimer. The N-terminus is blocked.

It localises to the cytoplasm. It carries out the reaction RX + glutathione = an S-substituted glutathione + a halide anion + H(+). Its function is as follows. Conjugation of reduced glutathione to a wide number of exogenous and endogenous hydrophobic electrophiles. The protein is Glutathione S-transferase 6.7 of Dicentrarchus labrax (European seabass).